The sequence spans 279 residues: Plasmodesmata-located protein 8 (279 aa).

The signal sequence occupies residues 1 to 20 (MRRLFLFSLLFLFFYSSSSS). Residues 21–253 (RSSSESHIFI…PTNGDHVGKS (233 aa)) are Extracellular-facing. 2 consecutive Gnk2-homologous domains span residues 27–135 (HIFI…TNDF) and 137–237 (GKPD…GSGY). Intrachain disulfides connect C34–C113, C89–C98, C101–C126, C148–C215, C191–C200, and C203–C228. The chain crosses the membrane as a helical span at residues 254–274 (IAIIVGVIAGFAILVVLLSLC). The tract at residues 254 to 274 (IAIIVGVIAGFAILVVLLSLC) is necessary and sufficient for plasmodesmal targeting. Residues 275–279 (RNSMH) lie on the Cytoplasmic side of the membrane.

This sequence belongs to the cysteine-rich repeat secretory protein family. Plasmodesmata-located proteins (PDLD) subfamily. Interacts with ACBP6; interaction occurs at the plasma membrane. In terms of assembly, (Microbial infection) Interacts with Grapevine fanleaf virus (GFLV) 2B-MP. Highly expressed in pollen, lateral root and elongation zone. Higher expression in the reproductive tissues (flowers and buds) than in vegetative organs (leaves and stems). High expression in shoot and root phloem companion cells (at protein level).

The protein localises to the cell membrane. It localises to the cell junction. The protein resides in the plasmodesma. Functionally, modulates cell-to-cell trafficking. This is Plasmodesmata-located protein 8 from Arabidopsis thaliana (Mouse-ear cress).